The primary structure comprises 368 residues: Phosphate acyltransferase (368 aa).

Residues 338-368 (GDGGHDAGGAGTASPAPGHHAEPSAAQSSKA) form a disordered region.

Belongs to the PlsX family. In terms of assembly, homodimer. Probably interacts with PlsY.

It is found in the cytoplasm. It carries out the reaction a fatty acyl-[ACP] + phosphate = an acyl phosphate + holo-[ACP]. It functions in the pathway lipid metabolism; phospholipid metabolism. Catalyzes the reversible formation of acyl-phosphate (acyl-PO(4)) from acyl-[acyl-carrier-protein] (acyl-ACP). This enzyme utilizes acyl-ACP as fatty acyl donor, but not acyl-CoA. The protein is Phosphate acyltransferase of Burkholderia ambifaria (strain MC40-6).